We begin with the raw amino-acid sequence, 288 residues long: ATP synthase gamma chain (288 aa).

It belongs to the ATPase gamma chain family. F-type ATPases have 2 components, CF(1) - the catalytic core - and CF(0) - the membrane proton channel. CF(1) has five subunits: alpha(3), beta(3), gamma(1), delta(1), epsilon(1). CF(0) has three main subunits: a, b and c.

It is found in the cell inner membrane. Functionally, produces ATP from ADP in the presence of a proton gradient across the membrane. The gamma chain is believed to be important in regulating ATPase activity and the flow of protons through the CF(0) complex. This chain is ATP synthase gamma chain, found in Legionella pneumophila (strain Paris).